A 302-amino-acid chain; its full sequence is GTPase Era (302 aa).

The 169-residue stretch at Tyr-9 to Glu-177 folds into the Era-type G domain. A G1 region spans residues Gly-17–Ser-24. Gly-17 to Ser-24 is a GTP binding site. The tract at residues Gln-43–His-47 is G2. Residues Asp-64–Gly-67 are G3. Residues Asp-64–Leu-68 and Asn-126–Asp-129 each bind GTP. The segment at Asn-126 to Asp-129 is G4. Residues Ile-156–Ala-158 are G5. In terms of domain architecture, KH type-2 spans Thr-208–Ser-285.

It belongs to the TRAFAC class TrmE-Era-EngA-EngB-Septin-like GTPase superfamily. Era GTPase family. In terms of assembly, monomer.

The protein localises to the cytoplasm. It localises to the cell inner membrane. In terms of biological role, an essential GTPase that binds both GDP and GTP, with rapid nucleotide exchange. Plays a role in 16S rRNA processing and 30S ribosomal subunit biogenesis and possibly also in cell cycle regulation and energy metabolism. The protein is GTPase Era of Haemophilus influenzae (strain PittGG).